The primary structure comprises 3470 residues: Dynein axonemal heavy chain 5 (3470 aa).

Residues 1–1938 form a stem region; it reads MFRIGRRQLW…MIHITDVAFT (1938 aa). Positions 899-918 are disordered; the sequence is EKVRHENASPNGDTSGGGEG. 4 AAA regions span residues 1939-2161, 2221-2440, 2547-2800, and 2913-3167; these read YQNE…VLRT, TAIS…IQNL, VYPP…IWQG, and LYNE…FRRS. ATP contacts are provided by residues 1977–1984 and 2259–2266; these read GPAGTGKT and GPSGSGKT. Coiled-coil stretches lie at residues 3207–3241 and 3434–3468; these read LKEASESVAALSQELAVKEKELQVANEKADMVLKE and HALAMQDLQKAQAELDDKQAELDVVQAEYEQAMTE.

This sequence belongs to the dynein heavy chain family. As to quaternary structure, interacts with DNAL1. Consists of at least two heavy chains and a number of intermediate and light chains.

The protein localises to the cytoplasm. The protein resides in the cytoskeleton. Its subcellular location is the cilium axoneme. Force generating protein of respiratory cilia. Produces force towards the minus ends of microtubules. Dynein has ATPase activity; the force-producing power stroke is thought to occur on release of ADP. Required for structural and functional integrity of the cilia of ependymal cells lining the brain ventricles. The sequence is that of Dynein axonemal heavy chain 5 from Rattus norvegicus (Rat).